Here is a 167-residue protein sequence, read N- to C-terminus: I-Kappa-B like protein F2 (167 aa).

3 ANK repeats span residues 54 to 86, 91 to 121, and 125 to 154; these read HGKQCVHIVSNPGIADPQEKLKLLMEWGADING, FGNTPLHIAAYTQNHKLATWLCNQPGINMGI, and LFKTPYYVACERHDLKIMNILRAKGTRCGV.

This sequence belongs to the polydnaviridae I-Kappa-B-like protein family.

Functionally, suppresses the host immune response through NF-kappa-B inactivation. Possesses ankyrin repeat domains required for NF-kappa-B binding but lacks the regulatory regions required for dissociation from NF-kappa-B and degradation. Therefore, prevents host NF-kappa-B release and subsequent activation. The protein is I-Kappa-B like protein F2 (F3) of Microplitis demolitor bracovirus (isolate Webb) (MdBV).